The following is a 165-amino-acid chain: Polcalcin Jun o 2 (165 aa).

EF-hand domains lie at 22–57, 58–86, 91–126, and 127–162; these read QSVH…LGSD, VGEA…FVDL, ASVK…VGEP, and CTIE…EMTD. The Ca(2+) site is built by D35, N37, D39, K41, E46, D71, D73, D75, Y77, E82, D104, D106, N108, S110, E115, D140, N142, D144, and E151.

The polypeptide is Polcalcin Jun o 2 (Juniperus oxycedrus (Prickly juniper)).